A 418-amino-acid polypeptide reads, in one-letter code: MFLKNILSVLRFALLIDAAPVKRSPGFVTLDFNVKRSLVVPDDPTAESKRSPLFLDLDPTQIPVDDTGRNVGVDKRGPVAVKLDNEIITYSADITVGSNNQKLSVIVDTGSSDLWIPDSKAICIPKWRGDCGDFCKNNGSYSPAASSTSKNLNTRFEIKYADGSYAKGNLYQDTVGIGGASVKNQLFANVWSTSAHKGILGIGFQTNEATRTPYDNLPISLKKQGIIAKNAYSLFLNSPEASSGQIIFGGIDKAKYSGSLVELPITSDRTLSVGLRSVNVMGRNVNVNAGVLLDSGTTISYFTPSIARSIIYALGGQVHFDSAGNKAYVADCKTSGTVDFQFDKNLKISVPASEFLYQLYYTNGKPYPKCEIRVRESEDNILGDNFMRSAYIVYDLDDKKISMAQVKYTSESNIVAIN.

A signal peptide spans 1-18 (MFLKNILSVLRFALLIDA). Residues 19 to 76 (APVKRSPGFVTLDFNVKRSLVVPDDPTAESKRSPLFLDLDPTQIPVDDTGRNVGVDKR) constitute a propeptide, activation peptide. In terms of domain architecture, Peptidase A1 spans 90-404 (YSADITVGSN…DLDDKKISMA (315 aa)). Asp108 is an active-site residue. A pepstatin A-binding site is contributed by 108–110 (DTG). The cysteines at positions 123 and 135 are disulfide-linked. An N-linked (GlcNAc...) asparagine glycan is attached at Asn138. Zn(2+) is bound at residue Asp268. Residue Asp294 is part of the active site. 294-298 (DSGTT) contributes to the pepstatin A binding site. Residues Cys332 and Cys370 are joined by a disulfide bond.

It belongs to the peptidase A1 family.

The protein resides in the secreted. The catalysed reaction is Preferential cleavage at the carboxyl of hydrophobic amino acids, but fails to cleave 15-Leu-|-Tyr-16, 16-Tyr-|-Leu-17 and 24-Phe-|-Phe-25 of insulin B chain. Activates trypsinogen, and degrades keratin.. With respect to regulation, inhibited by pepstatin A analogs. In terms of biological role, secreted aspartic peptidases (SAPs) are a group of ten acidic hydrolases considered as key virulence factors. These enzymes supply the fungus with nutrient amino acids as well as are able to degrade the selected host's proteins involved in the immune defense. Moreover, acts toward human hemoglobin though limited proteolysis to generate a variety of antimicrobial hemocidins, enabling to compete with the other microorganisms of the same physiological niche using the microbicidal peptides generated from the host protein. The sequence is that of Secreted aspartic protease 6 from Candida albicans (Yeast).